Consider the following 499-residue polypeptide: Glutathione reductase, cytosolic (499 aa).

FAD is bound by residues serine 35, glycine 36, glutamate 55, threonine 72, cysteine 73, and lysine 81. Serine 35 contributes to the glutathione binding site. Cysteine 73 and cysteine 78 are oxidised to a cystine. Tyrosine 130 lines the glutathione pocket. Glycine 146 contributes to the FAD binding site. NADP(+) contacts are provided by glycine 211, isoleucine 214, glutamate 217, arginine 234, arginine 240, and glycine 297. FAD contacts are provided by aspartate 338 and threonine 346. Residue alanine 376 coordinates NADP(+). An FAD-binding site is contributed by histidine 472. Histidine 472 acts as the Proton acceptor in catalysis.

It belongs to the class-I pyridine nucleotide-disulfide oxidoreductase family. As to quaternary structure, homodimer. FAD serves as cofactor.

The protein localises to the cytoplasm. The catalysed reaction is 2 glutathione + NADP(+) = glutathione disulfide + NADPH + H(+). Its function is as follows. Catalyzes the reduction of glutathione disulfide (GSSG) to reduced glutathione (GSH). Constitutes the major mechanism to maintain a high GSH:GSSG ratio in the cytosol. The polypeptide is Glutathione reductase, cytosolic (Arabidopsis thaliana (Mouse-ear cress)).